An 86-amino-acid polypeptide reads, in one-letter code: Cell division topological specificity factor (86 aa).

It belongs to the MinE family.

Prevents the cell division inhibition by proteins MinC and MinD at internal division sites while permitting inhibition at polar sites. This ensures cell division at the proper site by restricting the formation of a division septum at the midpoint of the long axis of the cell. This is Cell division topological specificity factor from Shewanella woodyi (strain ATCC 51908 / MS32).